We begin with the raw amino-acid sequence, 460 residues long: Putative protein p41 (460 aa).

Residues Ile14–Gly186 form the Helicase ATP-binding domain.

The sequence is that of Putative protein p41 (41) from Escherichia coli (Bacteriophage APSE-1).